The chain runs to 81 residues: Cytochrome b559 subunit alpha (81 aa).

A helical transmembrane segment spans residues 21 to 35 (VIHALTIPALFLAGW). Residue His-23 coordinates heme.

The protein belongs to the PsbE/PsbF family. As to quaternary structure, heterodimer of an alpha subunit and a beta subunit. PSII is composed of 1 copy each of membrane proteins PsbA, PsbB, PsbC, PsbD, PsbE, PsbF, PsbH, PsbI, PsbJ, PsbK, PsbL, PsbM, PsbT, PsbX, PsbY, PsbZ, Psb30/Ycf12, peripheral proteins PsbO, CyanoQ (PsbQ), PsbU, PsbV and a large number of cofactors. It forms dimeric complexes. The cofactor is heme b.

Its subcellular location is the cellular thylakoid membrane. Functionally, this b-type cytochrome is tightly associated with the reaction center of photosystem II (PSII). PSII is a light-driven water:plastoquinone oxidoreductase that uses light energy to abstract electrons from H(2)O, generating O(2) and a proton gradient subsequently used for ATP formation. It consists of a core antenna complex that captures photons, and an electron transfer chain that converts photonic excitation into a charge separation. This chain is Cytochrome b559 subunit alpha, found in Synechococcus sp. (strain JA-2-3B'a(2-13)) (Cyanobacteria bacterium Yellowstone B-Prime).